We begin with the raw amino-acid sequence, 440 residues long: MVSSNQDLLISPSIPYGEIAVPPSKSHSLRAILFASLSKGTSIIENCLFSPDSQAMLTACEKMGAHVRRIGDSLHIQGNPDPHHCHPRYFHMGNSGIALRFLTALSTLSPTPTLITGSHTLKRRPIAPLLSSLKQLGAHIRQKTSSSIPFTIHGPLSPGHVTISGQDSQYASALAITAALAPYPLSFSIENLKERPWFDLTLDWLHSLNISFLRDQDSLTFPGGQSLESFSYSVPGDYSSAAFLASFGLLSSSSKPTILRNLSSQDSQGDKLLFSLLKQLGAHILIGKHHIEMHPSSFSGGEIDMDPFIDALPILAVLCCFAKNPSRLYNALGAKDKESNRIEAIAHELQKMGGSVHPTRDGLYIKPSRLHGAVVDSHNDHRIAMALAVAGVHASSGQTLLCNTQCINKSFPYFVIAAQTLHANVRHYQADFPLRSSFCR.

Residues lysine 25, serine 26, and arginine 30 each coordinate 3-phosphoshikimate. Lysine 25 provides a ligand contact to phosphoenolpyruvate. The phosphoenolpyruvate site is built by glycine 96 and arginine 124. Positions 168, 169, 310, and 337 each coordinate 3-phosphoshikimate. Glutamine 169 is a phosphoenolpyruvate binding site. Aspartate 310 (proton acceptor) is an active-site residue. Positions 341, 382, and 409 each coordinate phosphoenolpyruvate.

The protein belongs to the EPSP synthase family. Monomer.

It is found in the cytoplasm. The enzyme catalyses 3-phosphoshikimate + phosphoenolpyruvate = 5-O-(1-carboxyvinyl)-3-phosphoshikimate + phosphate. It participates in metabolic intermediate biosynthesis; chorismate biosynthesis; chorismate from D-erythrose 4-phosphate and phosphoenolpyruvate: step 6/7. Its function is as follows. Catalyzes the transfer of the enolpyruvyl moiety of phosphoenolpyruvate (PEP) to the 5-hydroxyl of shikimate-3-phosphate (S3P) to produce enolpyruvyl shikimate-3-phosphate and inorganic phosphate. This chain is 3-phosphoshikimate 1-carboxyvinyltransferase, found in Chlamydia trachomatis serovar A (strain ATCC VR-571B / DSM 19440 / HAR-13).